The chain runs to 112 residues: Cuticle protein AM1239 (112 aa).

The Chitin-binding type R&amp;R domain maps to 16-85; the sequence is DGNFNYRFET…FIPTDHPLPA (70 aa). Thr-79 carries O-linked (HexNAc) threonine glycosylation.

In terms of tissue distribution, arthrodial membrane.

The chain is Cuticle protein AM1239 from Cancer pagurus (Rock crab).